Consider the following 433-residue polypeptide: 5-methylthioadenosine/S-adenosylhomocysteine deaminase (433 aa).

Residues histidine 67 and histidine 69 each contribute to the Zn(2+) site. 4 residues coordinate substrate: glutamate 96, arginine 148, arginine 158, and histidine 186. Histidine 213 lines the Zn(2+) pocket. Substrate-binding residues include glutamate 216 and aspartate 301. Residue aspartate 301 participates in Zn(2+) binding.

This sequence belongs to the metallo-dependent hydrolases superfamily. MTA/SAH deaminase family. Requires Zn(2+) as cofactor.

It carries out the reaction S-adenosyl-L-homocysteine + H2O + H(+) = S-inosyl-L-homocysteine + NH4(+). The enzyme catalyses S-methyl-5'-thioadenosine + H2O + H(+) = S-methyl-5'-thioinosine + NH4(+). In terms of biological role, catalyzes the deamination of 5-methylthioadenosine and S-adenosyl-L-homocysteine into 5-methylthioinosine and S-inosyl-L-homocysteine, respectively. Is also able to deaminate adenosine. The chain is 5-methylthioadenosine/S-adenosylhomocysteine deaminase from Pelotomaculum thermopropionicum (strain DSM 13744 / JCM 10971 / SI).